A 358-amino-acid chain; its full sequence is MAVDAHHLFLSPPQLFSNRELTMNNNTMEPTSGGFCNNNQTGYGVVSPFSVPNHTSTTTTATPPLLHVYGGSDTIPTTAGYYADGATNLDCEFFPLPTRKRSRDSSRSNYHHLLLQNPRSSSCVNAATTTTTTTLFSFLGQDIDISSHMNQQQHEIDRFVSLHLYQMERVKYEIEEKRKRQARTIMEAIEQGLVKRLRVKEEERERIGKVNHALEERVKSLSIENQIWRDLAQTNEATANHLRTNLEHVLAQVKDVSRGAGLEKNMNEEDDAESCCGSSCGGGGEETVRRRVGLEREAQDKAERRRRRMCRNCGEEESCVLLLPCRHLCLCGVCGSSVHTCPICTSPKNASVHVNMSS.

A coiled-coil region spans residues 171–234 (KYEIEEKRKR…NQIWRDLAQT (64 aa)). The interval 214–250 (LEERVKSLSIENQIWRDLAQTNEATANHLRTNLEHVL) is WRD domain. The segment at 310 to 345 (CRNCGEEESCVLLLPCRHLCLCGVCGSSVHTCPICT) adopts an RING-type zinc-finger fold.

As to quaternary structure, interacts with the DELLA proteins GAI, RGA, RGL1, RGL2 and RGL3.

The catalysed reaction is S-ubiquitinyl-[E2 ubiquitin-conjugating enzyme]-L-cysteine + [acceptor protein]-L-lysine = [E2 ubiquitin-conjugating enzyme]-L-cysteine + N(6)-ubiquitinyl-[acceptor protein]-L-lysine.. It functions in the pathway protein degradation; proteasomal ubiquitin-dependent pathway. In terms of biological role, probable E3 ubiquitin-protein ligase. Has no effect on the stability of the DELLA proteins. This is Probable BOI-related E3 ubiquitin-protein ligase 2 (BRG2) from Arabidopsis thaliana (Mouse-ear cress).